The following is a 209-amino-acid chain: Pyroglutamyl-peptidase 1 (209 aa).

Active-site residues include E85, C149, and H168.

It belongs to the peptidase C15 family. In terms of assembly, monomer.

It localises to the cytoplasm. It catalyses the reaction Release of an N-terminal pyroglutamyl group from a polypeptide, the second amino acid generally not being Pro.. With respect to regulation, inhibited by transition metal ions including Ni(2+), Zn(2+), and Cu(2+) and by sulfhydryl-blocking agents. In terms of biological role, removes 5-oxoproline from various penultimate amino acid residues except L-proline. The polypeptide is Pyroglutamyl-peptidase 1 (PGPEP1) (Homo sapiens (Human)).